A 101-amino-acid polypeptide reads, in one-letter code: Pterin-4-alpha-carbinolamine dehydratase (101 aa).

It belongs to the pterin-4-alpha-carbinolamine dehydratase family.

It catalyses the reaction (4aS,6R)-4a-hydroxy-L-erythro-5,6,7,8-tetrahydrobiopterin = (6R)-L-erythro-6,7-dihydrobiopterin + H2O. The sequence is that of Pterin-4-alpha-carbinolamine dehydratase (Pcd) from Drosophila virilis (Fruit fly).